A 123-amino-acid polypeptide reads, in one-letter code: Small ribosomal subunit protein uS12 (123 aa).

A 3-methylthioaspartic acid modification is found at Asp89.

The protein belongs to the universal ribosomal protein uS12 family. As to quaternary structure, part of the 30S ribosomal subunit. Contacts proteins S8 and S17. May interact with IF1 in the 30S initiation complex.

Its function is as follows. With S4 and S5 plays an important role in translational accuracy. In terms of biological role, interacts with and stabilizes bases of the 16S rRNA that are involved in tRNA selection in the A site and with the mRNA backbone. Located at the interface of the 30S and 50S subunits, it traverses the body of the 30S subunit contacting proteins on the other side and probably holding the rRNA structure together. The combined cluster of proteins S8, S12 and S17 appears to hold together the shoulder and platform of the 30S subunit. This is Small ribosomal subunit protein uS12 from Mesorhizobium japonicum (strain LMG 29417 / CECT 9101 / MAFF 303099) (Mesorhizobium loti (strain MAFF 303099)).